A 201-amino-acid polypeptide reads, in one-letter code: Transmembrane 4 L6 family member 18 (201 aa).

Over 1-9 (MGSRKCGGC) the chain is Cytoplasmic. A helical transmembrane segment spans residues 10 to 30 (LSCLLIPLALWSIIVNILLYF). Residues 31-49 (PNGQTSYASSNKLTNYVWY) lie on the Extracellular side of the membrane. Residues 50-70 (FEGICFSGIMMLIVTTVLLVL) form a helical membrane-spanning segment. Residues 71 to 93 (ENNNNYKCCQSENCSKKYVTLLS) are Cytoplasmic-facing. Residues 94 to 114 (IIFSSLGIAFSGYCLVISALG) traverse the membrane as a helical segment. The Extracellular portion of the chain corresponds to 115-157 (LVQGPYCRTLDGWEYAFEGTAGRFLTDSSIWIQCLEPAHVVEW). A helical transmembrane segment spans residues 158 to 178 (NIILFSILITLSGLQVIICLI). The Cytoplasmic segment spans residues 179 to 201 (RVVMQLSKILCGSYSVIFQPGII).

The protein belongs to the L6 tetraspanin family.

The protein resides in the membrane. The protein is Transmembrane 4 L6 family member 18 (TM4SF18) of Homo sapiens (Human).